Reading from the N-terminus, the 441-residue chain is GTPase Der (441 aa).

EngA-type G domains follow at residues 3–167 (PLIA…PNKT) and 176–351 (TRIA…EQFA). GTP is bound by residues 9 to 16 (GRPNVGKS), 56 to 60 (DTGGF), 119 to 122 (NKID), 182 to 189 (GRPNVGKS), 229 to 233 (DTAGI), and 294 to 297 (NKWD). The KH-like domain occupies 352-436 (KRISTSDLNR…PMRLLFKGRE (85 aa)).

The protein belongs to the TRAFAC class TrmE-Era-EngA-EngB-Septin-like GTPase superfamily. EngA (Der) GTPase family. Associates with the 50S ribosomal subunit.

GTPase that plays an essential role in the late steps of ribosome biogenesis. The chain is GTPase Der from Geotalea daltonii (strain DSM 22248 / JCM 15807 / FRC-32) (Geobacter daltonii).